The chain runs to 303 residues: Elongation factor Ts (303 aa).

The tract at residues 81-84 (TDFV) is involved in Mg(2+) ion dislocation from EF-Tu.

Belongs to the EF-Ts family.

It localises to the cytoplasm. Its function is as follows. Associates with the EF-Tu.GDP complex and induces the exchange of GDP to GTP. It remains bound to the aminoacyl-tRNA.EF-Tu.GTP complex up to the GTP hydrolysis stage on the ribosome. The chain is Elongation factor Ts from Mesomycoplasma hyopneumoniae (strain J / ATCC 25934 / NCTC 10110) (Mycoplasma hyopneumoniae).